The following is a 481-amino-acid chain: Tagaturonate/fructuronate epimerase (481 aa).

Asp-161 acts as the Proton acceptor in catalysis. His-162 contributes to the a divalent metal cation binding site. The Proton donor role is filled by Glu-266. Positions 308 and 341 each coordinate a divalent metal cation.

It belongs to the UxaE family. A divalent metal cation is required as a cofactor.

It catalyses the reaction keto-D-tagaturonate = keto-D-fructuronate. Functionally, catalyzes the epimerization of D-tagaturonate (D-TagA) to D-fructuronate (D-FruA). The polypeptide is Tagaturonate/fructuronate epimerase (Thermotoga maritima (strain ATCC 43589 / DSM 3109 / JCM 10099 / NBRC 100826 / MSB8)).